We begin with the raw amino-acid sequence, 1738 residues long: Sodium leak channel NALCN (1738 aa).

Residues 1–36 (MLKRKQSSRVEAQPVTDFGPDESLSDNADILWINKP) lie on the Cytoplasmic side of the membrane. A helical transmembrane segment spans residues 37 to 57 (WVHSLLRICAIISVISVCMNT). At 58 to 65 (PMTFEHYP) the chain is on the extracellular side. Residues 66–90 (PLQYVTFTLDTLLMFLYTAEMIAKM) form a helical membrane-spanning segment. Residues 91 to 106 (HIRGIVKGDSSYVKDR) lie on the Cytoplasmic side of the membrane. A helical membrane pass occupies residues 107-129 (WCVFDGFMVFCLWVSLVLQVFEI). Residues 130–137 (ADIVDQMS) are Extracellular-facing. The helical; Voltage-sensor transmembrane segment at 138-158 (PWGMLRIPRPLIMIRAFRIYF) threads the bilayer. Residues 159–173 (RFELPRTRITNILKR) are Cytoplasmic-facing. The chain crosses the membrane as a helical span at residues 174–199 (SGEQIWSVSIFLLFFLLLYGILGVQM). Topologically, residues 200–269 (FGTFTYHCVV…YSGFNEIGTS (70 aa)) are extracellular. 2 disulfides stabilise this stretch: cysteine 207–cysteine 239 and cysteine 229–cysteine 245. Asparagine 210 and asparagine 216 each carry an N-linked (GlcNAc...) asparagine glycan. An intramembrane region (pore-forming) is located at residues 270–289 (IFTVYEAASQEGWVFLMYRA). Residues 290–294 (IDSFP) lie on the Extracellular side of the membrane. Residues 295–322 (RWRSYFYFITLIFFLAWLVKNVFIAVII) form a helical membrane-spanning segment. Topologically, residues 323–382 (ETFAEIRVQFQQMWGSRSSTTSTATTQMFHEDAAGGWQLVAVDVNKPQGRAPACLQKMMR) are cytoplasmic. The chain crosses the membrane as a helical span at residues 383 to 403 (SSVFHMFILSMVTVDVIVAAS). The Extracellular portion of the chain corresponds to 404 to 416 (NYYKGENFRRQYD). Residues 417 to 439 (EFYLAEVAFTVLFDLEALLKIWC) traverse the membrane as a helical segment. Residues 440–447 (LGFTGYIS) lie on the Cytoplasmic side of the membrane. Residues 448-468 (SSLHKFELLLVIGTTLHVYPD) form a helical membrane-spanning segment. Over 469-472 (LYHS) the chain is Extracellular. The helical; Voltage-sensor transmembrane segment at 473–492 (QFTYFQVLRVVRLIKISPAL) threads the bilayer. Over 493 to 502 (EDFVYKIFGP) the chain is Cytoplasmic. A helical membrane pass occupies residues 503–530 (GKKLGSLVVFTASLLIVMSAISLQMFCF). Residues 531 to 543 (VEELDRFTTFPRA) lie on the Extracellular side of the membrane. The segment at residues 544–563 (FMSMFQILTQEGWVDVMDQT) is an intramembrane region (pore-forming). Residues 564–569 (LNAVGH) lie on the Extracellular side of the membrane. Residues 570-599 (MWAPVVAIYFILYHLFATLILLSLFVAVIL) traverse the membrane as a helical segment. Over 600 to 886 (DNLELDEDLK…QLYDLLGLVT (287 aa)) the chain is Cytoplasmic. Residues 762–785 (QERRSLRHGSNSQRISRGKSLETL) form a disordered region. The stretch at 795–830 (YRNAQREDSEIKMIQEKKEQAEMKRKVQEEELRENH) forms a coiled coil. The helical transmembrane segment at 887–906 (YLDWVMIIVTICSCISMMFE) threads the bilayer. Over 907–915 (SPFRRVMHA) the chain is Extracellular. A helical transmembrane segment spans residues 916–939 (PTLQIAEYVFVIFMSIELNLKIMA). The Cytoplasmic portion of the chain corresponds to 940–947 (DGLFFTPT). The helical transmembrane segment at 948-972 (AVIRDFGGVMDIFIYLVSLIFLCWM) threads the bilayer. Topologically, residues 973–980 (PQNVPAES) are extracellular. A helical; Voltage-sensor membrane pass occupies residues 981–1003 (GAQLLMVLRCLRPLRIFKLVPQM). Residues 1004–1015 (RKVVRELFSGFK) are Cytoplasmic-facing. A helical membrane pass occupies residues 1016–1039 (EIFLVSILLLTLMLVFASFGVQLF). Topologically, residues 1040 to 1104 (AGKLAKCNDP…NFNFDNVGNA (65 aa)) are extracellular. Cysteine 1046 and cysteine 1057 are disulfide-bonded. N-linked (GlcNAc...) asparagine glycosylation occurs at asparagine 1064. An intramembrane region (pore-forming) is located at residues 1105–1124 (MLALFEVLSLKGWVEVRDVI). The Extracellular portion of the chain corresponds to 1125–1129 (IHRVG). A helical membrane pass occupies residues 1130–1159 (PIHGIYIHVFVFLGCMIGLTLFVGVVIANF). Topologically, residues 1160-1210 (NENKGTALLTVDQRRWEDLKSRLKIAQPLHLPPRPDNDGFRAKMYDITQHP) are cytoplasmic. The helical transmembrane segment at 1211–1227 (FFKRTIALLVLAQSVLL) threads the bilayer. Residues 1228–1236 (SVKWDVEDP) are Extracellular-facing. Residues 1237–1260 (VTVPLATMSVVFTFIFVLEVTMKI) traverse the membrane as a helical segment. Residues 1261–1271 (IAMSPAGFWQS) are Cytoplasmic-facing. The chain crosses the membrane as a helical span at residues 1272-1293 (RRNRYDLLVTSLGVVWVVLHFA). Over 1294 to 1296 (LLN) the chain is Extracellular. Residues 1297–1318 (AYTYMMGACVIVFRFFSICGKH) traverse the membrane as a helical; Voltage-sensor segment. Residues 1319–1331 (VTLKMLLLTVVVS) are Cytoplasmic-facing. Residues 1332 to 1357 (MYKSFFIIVGMFLLLLCYAFAGVVLF) traverse the membrane as a helical segment. The Extracellular portion of the chain corresponds to 1358-1378 (GTVKYGENINRHANFSSAGKA). An intramembrane region (pore-forming) is located at residues 1379–1398 (ITVLFRIVTGEDWNKIMHDC). Over 1399-1420 (MVQPPFCTPDEFTYWATDCGNY) the chain is Extracellular. A disulfide bond links cysteine 1405 and cysteine 1417. A helical membrane pass occupies residues 1421–1447 (AGALMYFCSFYVIIAYIMLNLLVAIIV). The Cytoplasmic segment spans residues 1448–1738 (ENFSLFYSTE…DESGDDLLDI (291 aa)). Residues 1611–1678 (PPSIETTQPS…QWRLPSAPKP (68 aa)) are disordered. The span at 1613–1632 (SIETTQPSEDTNANSQDNSM) shows a compositional bias: polar residues. Residues 1633 to 1648 (QPETSSQQQLLSPTLS) show a composition bias toward low complexity.

It belongs to the NALCN family. Found in a complex with NALCN, UNC79, UNC80 and NACL1; these auxiliary subunits are indispensable for the function of NALCN channel. Interacts with UNC80; required for the NALCN activation/inhibition by GPCRs in neurons. Found in a complex with NALCN, UNC79 and UNC80; UNC80 bridges NALCN to UNC79. Interacts with CHRM3. Post-translationally, phosphorylated on tyrosine residues.

It localises to the cell membrane. The enzyme catalyses Na(+)(in) = Na(+)(out). With respect to regulation, inhibited by low micromolar concentrations of Gd(3+) and high micromolar concentrations of verapamil. Insensitive to tetrodotoxin (TTX) and potentiated by low external Ca(2+) concentration. Its function is as follows. Voltage-gated ion channel responsible for the resting Na(+) permeability that controls neuronal excitability. NALCN channel functions as a multi-protein complex, which consists at least of NALCN, NALF1, UNC79 and UNC80. NALCN is the voltage-sensing, pore-forming subunit of the NALCN channel complex. NALCN channel complex is constitutively active and conducts monovalent cations but is blocked by physiological concentrations of extracellular divalent cations. In addition to its role in regulating neuronal excitability, is required for normal respiratory rhythm, systemic osmoregulation by controlling the serum sodium concentration and in the regulation of the intestinal pace-making activity in the interstitial cells of Cajal. NALCN channel is also activated by neuropeptides such as neurotensin and substance P (SP) through a SRC family kinases-dependent pathway. In addition, NALCN activity is enhanced/modulated by several GPCRs, such as CHRM3. This Homo sapiens (Human) protein is Sodium leak channel NALCN.